Reading from the N-terminus, the 189-residue chain is Gluconokinase (189 aa).

16 to 23 serves as a coordination point for ATP; it reads GVSGAGKS.

It belongs to the gluconokinase GntK/GntV family. As to quaternary structure, monomer.

The catalysed reaction is D-gluconate + ATP = 6-phospho-D-gluconate + ADP + H(+). Its pathway is carbohydrate acid metabolism; D-gluconate degradation. Phosphorylates gluconate to 6-phosphogluconate. This chain is Gluconokinase, found in Arabidopsis thaliana (Mouse-ear cress).